The primary structure comprises 384 residues: Prokineticin receptor 2 (384 aa).

The Extracellular segment spans residues 1–53 (MAAQNGNASFPANFSIPQEHASSLPFNFSYDDYDLPLDEDEDMTKTQTFFAAK). 3 N-linked (GlcNAc...) asparagine glycosylation sites follow: asparagine 7, asparagine 13, and asparagine 27. The chain crosses the membrane as a helical span at residues 54 to 74 (IVIGVALVGIMLTCGIGNFVF). Residues 75–89 (ITALTRYKKLRNLTN) are Cytoplasmic-facing. The chain crosses the membrane as a helical span at residues 90 to 110 (LLIANLAISDFLVAIICCPFE). The Extracellular portion of the chain corresponds to 111–137 (MDYYVVHQLSWEHGHVLCACINYLRTV). A disulfide bridge connects residues cysteine 128 and cysteine 208. A helical membrane pass occupies residues 138 to 158 (SLYVSTNALLAIAIDRYLAIV). Topologically, residues 159–171 (HPLKPRMNYQTAS) are cytoplasmic. Residues 172–192 (FLIALVWMVSILISIPSAYFT) form a helical membrane-spanning segment. Residues 193 to 223 (KETVLFIVKNQKKIFCGQVWPVDQQLYYKSY) are Extracellular-facing. A helical transmembrane segment spans residues 224 to 244 (FLFVFGIEFLGPVFTMTLCYA). Topologically, residues 245-273 (RISRELWFKAVPGFQTEQIRKRLRCRRKT) are cytoplasmic. A helical transmembrane segment spans residues 274–294 (VLVLMCILTAYVLCWAPFYGF). The Extracellular segment spans residues 295–313 (TIVRDFFPTVFVKEKHYLT). The helical transmembrane segment at 314–334 (AFYVVECIAMSNSMINTVCFV) threads the bilayer. Over 335–384 (TVKNSTMKYFKKMLLLHWRPSHHGSKSSADLDLKTSRLPATEEVDCIRLK) the chain is Cytoplasmic.

It belongs to the G-protein coupled receptor 1 family. In terms of assembly, homodimer.

It localises to the cell membrane. In terms of biological role, receptor for prokineticin 2. Exclusively coupled to the G(q) subclass of heteromeric G proteins. Activation leads to mobilization of calcium, stimulation of phosphoinositide turnover and activation of p44/p42 mitogen-activated protein kinase. The polypeptide is Prokineticin receptor 2 (PROKR2) (Bos taurus (Bovine)).